Here is a 20-residue protein sequence, read N- to C-terminus: Protease inhibitor (20 aa).

Monomer. In terms of processing, glycosylated. As to expression, stored in epidermis and secreted into the hemolymph and cuticle. Not detected in the interior of the epidermis, fat body cells or columnar or goblet cells of the midgut epithelium (at protein level).

In terms of biological role, inhibits trypsin and chymotrypsin. This is Protease inhibitor from Antheraea mylitta (Tasar silkworm).